The primary structure comprises 156 residues: SsrA-binding protein (156 aa).

Residues 127–156 (GKKKYDKREDLKKKDAKRDVDRAMRDRQKY) are disordered. Basic and acidic residues predominate over residues 132 to 156 (DKREDLKKKDAKRDVDRAMRDRQKY).

The protein belongs to the SmpB family.

It localises to the cytoplasm. Required for rescue of stalled ribosomes mediated by trans-translation. Binds to transfer-messenger RNA (tmRNA), required for stable association of tmRNA with ribosomes. tmRNA and SmpB together mimic tRNA shape, replacing the anticodon stem-loop with SmpB. tmRNA is encoded by the ssrA gene; the 2 termini fold to resemble tRNA(Ala) and it encodes a 'tag peptide', a short internal open reading frame. During trans-translation Ala-aminoacylated tmRNA acts like a tRNA, entering the A-site of stalled ribosomes, displacing the stalled mRNA. The ribosome then switches to translate the ORF on the tmRNA; the nascent peptide is terminated with the 'tag peptide' encoded by the tmRNA and targeted for degradation. The ribosome is freed to recommence translation, which seems to be the essential function of trans-translation. In Exiguobacterium sp. (strain ATCC BAA-1283 / AT1b), this protein is SsrA-binding protein.